A 310-amino-acid chain; its full sequence is uncharacterized protein (310 aa).

The next 5 helical transmembrane spans lie at 10 to 30 (AVLS…AYAI), 44 to 64 (TVNL…ATPA), 78 to 98 (FSSG…GYSA), 113 to 133 (LGIA…WILW), and 161 to 181 (VVVA…PLIA). The span at 285–297 (PLEDPKSWQHPDE) shows a compositional bias: basic and acidic residues. Residues 285-310 (PLEDPKSWQHPDEFPPSAPLNRDKPN) form a disordered region.

Belongs to the cation diffusion facilitator (CDF) transporter (TC 2.A.4) family.

The protein resides in the cell membrane. This is an uncharacterized protein from Synechocystis sp. (strain ATCC 27184 / PCC 6803 / Kazusa).